Reading from the N-terminus, the 383-residue chain is Probable L-tyrosine/L-aspartate decarboxylase (383 aa).

Position 227 is an N6-(pyridoxal phosphate)lysine (lysine 227).

This sequence belongs to the group II decarboxylase family. MfnA subfamily. Pyridoxal 5'-phosphate is required as a cofactor.

The catalysed reaction is L-tyrosine + H(+) = tyramine + CO2. It catalyses the reaction L-aspartate + H(+) = beta-alanine + CO2. It functions in the pathway cofactor biosynthesis; methanofuran biosynthesis. Its pathway is cofactor biosynthesis; coenzyme A biosynthesis. Functionally, catalyzes the decarboxylation of L-tyrosine to produce tyramine for methanofuran biosynthesis. Can also catalyze the decarboxylation of L-aspartate to produce beta-alanine for coenzyme A (CoA) biosynthesis. The chain is Probable L-tyrosine/L-aspartate decarboxylase from Methanothrix thermoacetophila (strain DSM 6194 / JCM 14653 / NBRC 101360 / PT) (Methanosaeta thermophila).